A 401-amino-acid polypeptide reads, in one-letter code: DNA replication and repair protein RecF (401 aa).

Position 30–37 (30–37 (GYNGIGKT)) interacts with ATP.

Belongs to the RecF family.

It is found in the cytoplasm. Functionally, the RecF protein is involved in DNA metabolism; it is required for DNA replication and normal SOS inducibility. RecF binds preferentially to single-stranded, linear DNA. It also seems to bind ATP. The protein is DNA replication and repair protein RecF of Arthrobacter sp. (strain FB24).